Consider the following 1118-residue polypeptide: Sodium-driven chloride bicarbonate exchanger (1118 aa).

Disordered regions lie at residues 1-23 (MEIK…EEAV) and 58-97 (GRKS…TPSQ). Over 1 to 509 (MEIKDQGAQM…DFRDAFSLQC (509 aa)) the chain is Cytoplasmic. A compositionally biased stretch (basic residues) spans 59–76 (RKSHRRHRHRGHKHRKRD). A compositionally biased stretch (basic and acidic residues) spans 77–90 (RERDSGLEDGRESP). Serine 89 bears the Phosphoserine mark. Position 94 is a phosphothreonine (threonine 94). Residues histidine 221 and histidine 223 each coordinate Zn(2+). 2 disordered regions span residues 269-310 (AENK…KGPP) and 457-476 (NGTA…GPEL). Position 276 is a phosphoserine (serine 276). A helical membrane pass occupies residues 510–530 (LASFLFLYCACMSPVITFGGL). Topologically, residues 531–538 (LGEATEGR) are extracellular. A helical membrane pass occupies residues 539 to 559 (ISAIESLFGASMTGIAYSLFG). Residues 560–562 (GQP) are Cytoplasmic-facing. A helical membrane pass occupies residues 563 to 583 (LTILGSTGPVLVFEKILFKFC). Residues 584-596 (KEYGLSYLSLRAS) lie on the Extracellular side of the membrane. The chain crosses the membrane as a helical span at residues 597–617 (IGLWTATLCIILVATDASSLV). Topologically, residues 618-626 (CYITRFTEE) are cytoplasmic. The chain crosses the membrane as a helical span at residues 627-647 (AFASLICIIFIYEALEKLFEL). Topologically, residues 648–720 (SETYPINMHN…VGRACGHGHP (73 aa)) are extracellular. Asparagine 677, asparagine 687, and asparagine 697 each carry an N-linked (GlcNAc...) asparagine glycan. The chain crosses the membrane as a helical span at residues 721–741 (YVPDVLFWSVILFFSTVTMSA). The Cytoplasmic portion of the chain corresponds to 742-762 (TLKQFKTSRYFPTKVRSIVSD). Residues 763-783 (FAVFLTILCMVLIDYAIGIPS) traverse the membrane as a helical segment. Residues 784 to 809 (PKLQVPSVFKPTRDDRGWFVTPLGPN) are Extracellular-facing. A helical transmembrane segment spans residues 810 to 830 (PWWTIIAAIIPALLCTILIFM). Residues 831–855 (DQQITAVIINRKEHKLKKGCGYHLD) lie on the Cytoplasmic side of the membrane. A helical membrane pass occupies residues 856–876 (LLMVAVMLGVCSIMGLPWFVA). The Extracellular portion of the chain corresponds to 877–912 (ATVLSITHVNSLKLESECSAPGEQPKFLGIREQRVT). The chain crosses the membrane as a helical span at residues 913-933 (GLMIFILMGSSVFMTSILKFI). Residues 934–935 (PM) are Cytoplasmic-facing. A helical transmembrane segment spans residues 936-956 (PVLYGVFLYMGASSLKGIQLF). Residues 957–998 (DRIKLFWMPAKHQPDFIYLRHVPLRKVHLFTVIQMSCLGLLW) lie on the Extracellular side of the membrane. A helical transmembrane segment spans residues 999-1019 (IIKVSRAAIVFPMMVLALVFV). Topologically, residues 1020–1118 (RKLMDFLFTK…SRFPSKSSPS (99 aa)) are cytoplasmic. Phosphoserine is present on residues serine 1057 and serine 1085.

Belongs to the anion exchanger (TC 2.A.31) family. N-glycosylated. In terms of tissue distribution, in the brain, detected in cerebral cortex, subcortex, cerebellum, hippocampus and medulla (at protein level). In the cerebrum, expressed at high levels throughout the cortex, at lower levels in striatum and not detectable in the corpus callosum (at protein level). In the cerebellum, detected at high levels in the molecular layer but at very low levels in the granular layer (at protein level). In the central nervous system, detected in neurons in the olfactory bulb, cortex and cerebellum (at protein level). Within the hippocampus, abundantly expressed in CA3 pyramidal cells (at protein level). Strongly expressed in the retina with high levels in bipolar and amacrine cells (at protein level). Expressed in the epithelial cells of the choroid plexus. During embryonic development, expressed in neurons of the central nervous system. Also expressed in the peripheral nervous system and in non-neuronal tissues such as the dura and some epithelia including the acid-secreting epithelium of the stomach and the duodenal epithelium. In the embryonic retina, expression is restricted to the neuronal cell layer and the retinal pigment epithelium. As to expression, expressed at high levels in brain and at low levels in the pituitary, testis, kidney and ileum. Also expressed in pancreatic islets.

Its subcellular location is the basolateral cell membrane. It is found in the apical cell membrane. It localises to the cell projection. The protein localises to the dendrite. The protein resides in the axon. Its subcellular location is the perikaryon. It is found in the presynapse. It localises to the postsynapse. It carries out the reaction 2 hydrogencarbonate(out) + chloride(in) + Na(+)(out) = 2 hydrogencarbonate(in) + chloride(out) + Na(+)(in). Zinc-binding negatively regulates its activity. Its function is as follows. Sodium/bicarbonate cotransporter which plays an important role in regulating intracellular pH. Has been shown to act as a sodium/bicarbonate cotransporter in exchange for intracellular chloride. Has also been shown to act as a sodium/biocarbonate cotransporter which is not responsible for net efflux of chloride, with the observed chloride efflux being due to chloride self-exchange. Controls neuronal pH and may contribute to the secretion of cerebrospinal fluid. Acting on presynaptic intracellular pH, it promotes GABA release, reduces the excitability of CA1 pyramidal neurons, and modulates short-term synaptic plasticity. Required in retinal cells to maintain normal pH which is necessary for normal vision. In the kidney, likely to mediate bicarbonate reclamation in the apical membrane of the proximal tubules. Sodium/bicarbonate cotransporter which mediates cotransport of sodium and bicarbonate in association with an efflux of intracellular chloride. The chain is Sodium-driven chloride bicarbonate exchanger from Mus musculus (Mouse).